We begin with the raw amino-acid sequence, 510 residues long: Histone deacetylase 3 (510 aa).

The segment at 24–338 (RRVCYFYDPE…WCYETGVALG (315 aa)) is histone deacetylase. The Proton donor/acceptor role is filled by His-158. Asp-193, His-195, and Asp-281 together coordinate Zn(2+). Positions 394–510 (PSVQFQERIP…ARNEPGSSPK (117 aa)) are disordered. Composition is skewed to basic and acidic residues over residues 418 to 434 (DERH…DHKP) and 448 to 472 (VKRE…HKGP). The span at 485 to 503 (APTADANAVAVNAPGNARN) shows a compositional bias: low complexity.

Belongs to the histone deacetylase family. HD Type 1 subfamily. Zn(2+) is required as a cofactor. As to expression, expressed in roots.

It localises to the nucleus. It catalyses the reaction N(6)-acetyl-L-lysyl-[histone] + H2O = L-lysyl-[histone] + acetate. Responsible for the deacetylation of lysine residues on the N-terminal part of the core histones (H2A, H2B, H3 and H4). Histone deacetylation gives a tag for epigenetic repression and plays an important role in transcriptional regulation, cell cycle progression and developmental events. Histone deacetylases act via the formation of large multiprotein complexes. This Oryza sativa subsp. japonica (Rice) protein is Histone deacetylase 3.